A 351-amino-acid chain; its full sequence is Divinyl chlorophyll a/b light-harvesting protein PcbC (351 aa).

6 consecutive transmembrane segments (helical) span residues 27–47, 81–101, 140–160, 202–222, 242–262, and 309–329; these read FIGS…GSTL, GVWT…FSAV, FILG…VEWA, VMSG…WHIA, AVLS…AFWC, and LSNV…WHAL.

It belongs to the PsbB/PsbC family. IsiA/Pcb subfamily. In terms of assembly, the antenna complex consists of divinyl chlorophylls (a and b) and divinyl chlorophyll a/b binding proteins and binds more divinyl chlorophyll b than does the antenna complex from high-light-adapted Prochlorococcus. Requires divinyl chlorophyll a as cofactor. The cofactor is divinyl chlorophyll b.

It localises to the cellular thylakoid membrane. In terms of biological role, the antenna complex functions as a light receptor, it captures and delivers excitation energy to photosystems II and I. The Prochlorales pcb genes are not related to higher plant LHCs. The sequence is that of Divinyl chlorophyll a/b light-harvesting protein PcbC (pcbC) from Prochlorococcus marinus (strain NATL2A).